The sequence spans 360 residues: Phospho-N-acetylmuramoyl-pentapeptide-transferase (360 aa).

10 helical membrane-spanning segments follow: residues 26 to 46, 73 to 93, 98 to 118, 132 to 152, 168 to 188, 199 to 219, 236 to 256, 263 to 283, 288 to 308, and 338 to 358; these read SIMA…KVIN, TMGG…WADL, VWFT…DDYW, WKYF…YAMG, VMPQ…VGTS, GLAI…AWAT, SGEL…FLWY, VFMG…IAVL, LLLL…ILQV, and VIVR…VTLK.

It belongs to the glycosyltransferase 4 family. MraY subfamily. Mg(2+) serves as cofactor.

Its subcellular location is the cell inner membrane. It carries out the reaction UDP-N-acetyl-alpha-D-muramoyl-L-alanyl-gamma-D-glutamyl-meso-2,6-diaminopimeloyl-D-alanyl-D-alanine + di-trans,octa-cis-undecaprenyl phosphate = di-trans,octa-cis-undecaprenyl diphospho-N-acetyl-alpha-D-muramoyl-L-alanyl-D-glutamyl-meso-2,6-diaminopimeloyl-D-alanyl-D-alanine + UMP. It participates in cell wall biogenesis; peptidoglycan biosynthesis. Functionally, catalyzes the initial step of the lipid cycle reactions in the biosynthesis of the cell wall peptidoglycan: transfers peptidoglycan precursor phospho-MurNAc-pentapeptide from UDP-MurNAc-pentapeptide onto the lipid carrier undecaprenyl phosphate, yielding undecaprenyl-pyrophosphoryl-MurNAc-pentapeptide, known as lipid I. The protein is Phospho-N-acetylmuramoyl-pentapeptide-transferase of Haemophilus ducreyi (strain 35000HP / ATCC 700724).